A 308-amino-acid chain; its full sequence is Elongation factor Ts (308 aa).

Positions 80 to 83 are involved in Mg(2+) ion dislocation from EF-Tu; that stretch reads TDFV.

This sequence belongs to the EF-Ts family.

The protein resides in the cytoplasm. Associates with the EF-Tu.GDP complex and induces the exchange of GDP to GTP. It remains bound to the aminoacyl-tRNA.EF-Tu.GTP complex up to the GTP hydrolysis stage on the ribosome. This Rhizobium etli (strain ATCC 51251 / DSM 11541 / JCM 21823 / NBRC 15573 / CFN 42) protein is Elongation factor Ts.